A 138-amino-acid polypeptide reads, in one-letter code: Cysteine desulfuration protein SufE (138 aa).

The active-site Cysteine persulfide intermediate is the Cys51.

This sequence belongs to the SufE family. As to quaternary structure, homodimer. Interacts with SufS.

It is found in the cytoplasm. Its pathway is cofactor biosynthesis; iron-sulfur cluster biosynthesis. Participates in cysteine desulfuration mediated by SufS. Cysteine desulfuration mobilizes sulfur from L-cysteine to yield L-alanine and constitutes an essential step in sulfur metabolism for biosynthesis of a variety of sulfur-containing biomolecules. Functions as a sulfur acceptor for SufS, by mediating the direct transfer of the sulfur atom from the S-sulfanylcysteine of SufS, an intermediate product of cysteine desulfuration process. This is Cysteine desulfuration protein SufE from Escherichia coli O81 (strain ED1a).